A 310-amino-acid polypeptide reads, in one-letter code: tRNA-5-methyluridine(54) 2-sulfurtransferase (310 aa).

Residues C3, C6, C22, and H25 each contribute to the Zn(2+) site. A53 and I79 together coordinate ATP. The [4Fe-4S] cluster site is built by C128 and C131. An intrachain disulfide couples C128 to C220. Residues K135 and G154 each contribute to the ATP site. [4Fe-4S] cluster is bound at residue C220. 4 residues coordinate Zn(2+): C272, C275, C284, and C287.

The protein belongs to the TtcA family. TtuA subfamily. Homodimer. The cofactor is [4Fe-4S] cluster. Requires Mg(2+) as cofactor.

It catalyses the reaction 5-methyluridine(54) in tRNA + hydrogen sulfide + ATP = 5-methyl-2-thiouridine(54) in tRNA + AMP + diphosphate. Its pathway is tRNA modification. Its function is as follows. Catalyzes the ATP-dependent 2-thiolation of 5-methyluridine residue at position 54 in the T loop of tRNAs, leading to 5-methyl-2-thiouridine (m(5)s(2)U or s(2)T). This modification allows thermal stabilization of tRNAs in thermophilic microorganisms, and is required for cell growth at high temperatures. Can use free sulfide as sulfur source in vitro, which may be also the sulfur source in vivo. This Pyrococcus horikoshii (strain ATCC 700860 / DSM 12428 / JCM 9974 / NBRC 100139 / OT-3) protein is tRNA-5-methyluridine(54) 2-sulfurtransferase.